The sequence spans 171 residues: Mitoferrin-1 (171 aa).

The segment at 1–40 (MELRRGGVGSQARARRMDGDSRDGGGGCKDAGSEDYENLP) is disordered. A Solcar repeat occupies 43–131 (ASLSTHMTAG…FACYENMKRT (89 aa)). 3 helical membrane-spanning segments follow: residues 45–64 (LSTH…SVMY), 105–125 (RGLN…FACY), and 143–163 (HLAN…PSTD).

This sequence belongs to the mitochondrial carrier (TC 2.A.29) family. Interacts with ACB10; this interaction stabilizes SLC25A37 and enhances the function of SLC25A37 to import mitochondrial iron during erythroid differentiation.

The protein resides in the mitochondrion inner membrane. The enzyme catalyses Fe(2+)(in) = Fe(2+)(out). In terms of biological role, mitochondrial iron transporter that specifically mediates iron uptake in developing erythroid cells, thereby playing an essential role in heme biosynthesis. The protein is Mitoferrin-1 (SLC25A37) of Bos taurus (Bovine).